Here is a 401-residue protein sequence, read N- to C-terminus: Probable tRNA sulfurtransferase (401 aa).

One can recognise a THUMP domain in the interval 60 to 165; the sequence is EPISEQLKGV…EQATYITFKD (106 aa). Residues 183-184, 208-209, arginine 265, glycine 287, and glutamine 296 contribute to the ATP site; these read ML and HF.

The protein belongs to the ThiI family.

The protein localises to the cytoplasm. The enzyme catalyses [ThiI sulfur-carrier protein]-S-sulfanyl-L-cysteine + a uridine in tRNA + 2 reduced [2Fe-2S]-[ferredoxin] + ATP + H(+) = [ThiI sulfur-carrier protein]-L-cysteine + a 4-thiouridine in tRNA + 2 oxidized [2Fe-2S]-[ferredoxin] + AMP + diphosphate. The catalysed reaction is [ThiS sulfur-carrier protein]-C-terminal Gly-Gly-AMP + S-sulfanyl-L-cysteinyl-[cysteine desulfurase] + AH2 = [ThiS sulfur-carrier protein]-C-terminal-Gly-aminoethanethioate + L-cysteinyl-[cysteine desulfurase] + A + AMP + 2 H(+). Its pathway is cofactor biosynthesis; thiamine diphosphate biosynthesis. Functionally, catalyzes the ATP-dependent transfer of a sulfur to tRNA to produce 4-thiouridine in position 8 of tRNAs, which functions as a near-UV photosensor. Also catalyzes the transfer of sulfur to the sulfur carrier protein ThiS, forming ThiS-thiocarboxylate. This is a step in the synthesis of thiazole, in the thiamine biosynthesis pathway. The sulfur is donated as persulfide by IscS. The chain is Probable tRNA sulfurtransferase from Bacillus pumilus (strain SAFR-032).